The chain runs to 162 residues: Sorting nexin-12 (162 aa).

The disordered stretch occupies residues 1–20; sequence MSDTAVADTRRLNSKPQDLT. Position 2 is an N-acetylserine (S2). Y23 bears the Phosphotyrosine mark. Residues 28–152 form the PX domain; the sequence is NFLEIDIFNP…HMFLQEEAID (125 aa). A 1,2-diacyl-sn-glycero-3-phospho-(1D-myo-inositol-3-phosphate) contacts are provided by R71, S73, K96, and R119. S73 carries the phosphoserine modification.

This sequence belongs to the sorting nexin family.

It is found in the membrane. In terms of biological role, may be involved in several stages of intracellular trafficking. The protein is Sorting nexin-12 (SNX12) of Homo sapiens (Human).